We begin with the raw amino-acid sequence, 494 residues long: UDP-N-acetylmuramoyl-L-alanyl-D-glutamate--L-lysine ligase (494 aa).

S30 serves as a coordination point for UDP-N-acetyl-alpha-D-muramoyl-L-alanyl-D-glutamate. Residue 110–116 coordinates ATP; the sequence is GTNGKTS. Residues 152-153, S179, and R187 contribute to the UDP-N-acetyl-alpha-D-muramoyl-L-alanyl-D-glutamate site; that span reads TT. K219 bears the N6-carboxylysine mark. The short motif at 406-409 is the L-lysine recognition motif element; it reads DNPA.

This sequence belongs to the MurCDEF family. MurE subfamily. Post-translationally, carboxylation is probably crucial for Mg(2+) binding and, consequently, for the gamma-phosphate positioning of ATP.

It is found in the cytoplasm. The enzyme catalyses UDP-N-acetyl-alpha-D-muramoyl-L-alanyl-D-glutamate + L-lysine + ATP = UDP-N-acetyl-alpha-D-muramoyl-L-alanyl-gamma-D-glutamyl-L-lysine + ADP + phosphate + H(+). Its pathway is cell wall biogenesis; peptidoglycan biosynthesis. Its function is as follows. Catalyzes the addition of L-lysine to the nucleotide precursor UDP-N-acetylmuramoyl-L-alanyl-D-glutamate (UMAG) in the biosynthesis of bacterial cell-wall peptidoglycan. The chain is UDP-N-acetylmuramoyl-L-alanyl-D-glutamate--L-lysine ligase from Staphylococcus haemolyticus (strain JCSC1435).